A 358-amino-acid chain; its full sequence is Phospho-N-acetylmuramoyl-pentapeptide-transferase (358 aa).

10 consecutive transmembrane segments (helical) span residues 19–39, 71–91, 95–115, 126–146, 166–186, 194–214, 237–257, 261–281, 286–306, and 336–356; these read YLTL…VLIG, TMGG…WADL, YVWV…IDDY, LIAR…ALYL, VMPQ…VGTS, GLDG…AIFA, LVIV…FNTY, VFMG…IAVL, IVLV…ILQV, and VIVR…ATLK.

This sequence belongs to the glycosyltransferase 4 family. MraY subfamily. It depends on Mg(2+) as a cofactor.

The protein localises to the cell inner membrane. The enzyme catalyses UDP-N-acetyl-alpha-D-muramoyl-L-alanyl-gamma-D-glutamyl-meso-2,6-diaminopimeloyl-D-alanyl-D-alanine + di-trans,octa-cis-undecaprenyl phosphate = di-trans,octa-cis-undecaprenyl diphospho-N-acetyl-alpha-D-muramoyl-L-alanyl-D-glutamyl-meso-2,6-diaminopimeloyl-D-alanyl-D-alanine + UMP. The protein operates within cell wall biogenesis; peptidoglycan biosynthesis. Its function is as follows. Catalyzes the initial step of the lipid cycle reactions in the biosynthesis of the cell wall peptidoglycan: transfers peptidoglycan precursor phospho-MurNAc-pentapeptide from UDP-MurNAc-pentapeptide onto the lipid carrier undecaprenyl phosphate, yielding undecaprenyl-pyrophosphoryl-MurNAc-pentapeptide, known as lipid I. This chain is Phospho-N-acetylmuramoyl-pentapeptide-transferase, found in Pseudoalteromonas atlantica (strain T6c / ATCC BAA-1087).